Here is a 235-residue protein sequence, read N- to C-terminus: Isoprenyl transferase (235 aa).

Asp21 is a catalytic residue. Residue Asp21 participates in Mg(2+) binding. Substrate contacts are provided by residues 22–25 (GNAR), Trp26, Lys34, His38, and 66–68 (SSE). Asn69 serves as the catalytic Proton acceptor. Residues Trp70, Arg72, Arg183, and 189 to 191 (RIS) contribute to the substrate site. Residue Glu202 coordinates Mg(2+).

The protein belongs to the UPP synthase family. As to quaternary structure, homodimer. Mg(2+) is required as a cofactor.

Functionally, catalyzes the condensation of isopentenyl diphosphate (IPP) with allylic pyrophosphates generating different type of terpenoids. This chain is Isoprenyl transferase, found in Rickettsia conorii (strain ATCC VR-613 / Malish 7).